A 421-amino-acid polypeptide reads, in one-letter code: Tyrosine--tRNA ligase (421 aa).

Tyr36 contacts L-tyrosine. The 'HIGH' region signature appears at 41–50; the sequence is PTADSLHIGH. Tyr170 and Gln174 together coordinate L-tyrosine. Residues 231-235 carry the 'KMSKS' region motif; that stretch reads KFGKS. Lys234 lines the ATP pocket. Residues 353 to 420 enclose the S4 RNA-binding domain; sequence TNIVEALIET…KKKYFMVNYQ (68 aa).

The protein belongs to the class-I aminoacyl-tRNA synthetase family. TyrS type 1 subfamily. In terms of assembly, homodimer.

Its subcellular location is the cytoplasm. It carries out the reaction tRNA(Tyr) + L-tyrosine + ATP = L-tyrosyl-tRNA(Tyr) + AMP + diphosphate + H(+). Catalyzes the attachment of tyrosine to tRNA(Tyr) in a two-step reaction: tyrosine is first activated by ATP to form Tyr-AMP and then transferred to the acceptor end of tRNA(Tyr). In Staphylococcus epidermidis (strain ATCC 35984 / DSM 28319 / BCRC 17069 / CCUG 31568 / BM 3577 / RP62A), this protein is Tyrosine--tRNA ligase.